Consider the following 43-residue polypeptide: Photosystem II reaction center protein Psb30 (43 aa).

Residues 16 to 36 (IAQLTMLAMVLIAGPVVIVLL) form a helical membrane-spanning segment.

This sequence belongs to the Psb30/Ycf12 family. As to quaternary structure, PSII is composed of 1 copy each of membrane proteins PsbA, PsbB, PsbC, PsbD, PsbE, PsbF, PsbH, PsbI, PsbJ, PsbK, PsbL, PsbM, PsbT, PsbX, PsbY, PsbZ, Psb30/Ycf12, peripheral proteins PsbO, CyanoQ (PsbQ), PsbU, PsbV and a large number of cofactors. It forms dimeric complexes.

Its subcellular location is the cellular thylakoid membrane. Its function is as follows. A core subunit of photosystem II (PSII), probably helps stabilize the reaction center. This is Photosystem II reaction center protein Psb30 from Trichodesmium erythraeum (strain IMS101).